A 116-amino-acid chain; its full sequence is Large ribosomal subunit protein uL18 (116 aa).

Belongs to the universal ribosomal protein uL18 family. In terms of assembly, part of the 50S ribosomal subunit; part of the 5S rRNA/L5/L18/L25 subcomplex. Contacts the 5S and 23S rRNAs.

This is one of the proteins that bind and probably mediate the attachment of the 5S RNA into the large ribosomal subunit, where it forms part of the central protuberance. The chain is Large ribosomal subunit protein uL18 from Psychromonas ingrahamii (strain DSM 17664 / CCUG 51855 / 37).